We begin with the raw amino-acid sequence, 150 residues long: UPF0756 membrane protein Dd1591_2981 (150 aa).

4 consecutive transmembrane segments (helical) span residues Ile-10–Phe-32, Tyr-51–Gly-71, Leu-88–Met-108, and Ala-127–Ile-147.

This sequence belongs to the UPF0756 family.

It localises to the cell membrane. The sequence is that of UPF0756 membrane protein Dd1591_2981 from Dickeya chrysanthemi (strain Ech1591) (Dickeya zeae (strain Ech1591)).